A 520-amino-acid polypeptide reads, in one-letter code: Cytochrome P450 6d3 (520 aa).

Cys461 contacts heme.

The protein belongs to the cytochrome P450 family. Requires heme as cofactor.

Its subcellular location is the endoplasmic reticulum membrane. It is found in the microsome membrane. Metabolizes pyrethroid insecticides and other xenobiotics. This chain is Cytochrome P450 6d3 (CYP6D3), found in Musca domestica (House fly).